The sequence spans 321 residues: Glutamyl-Q tRNA(Asp) synthetase (321 aa).

L-glutamate-binding positions include 25 to 29 and Glu61; that span reads RFAPS. The 'HIGH' region motif lies at 28–38; that stretch reads PSPSGDLHFGS. Residues Cys117, Cys119, Tyr131, and Cys135 each contribute to the Zn(2+) site. L-glutamate is bound by residues Tyr188 and Arg206. A 'KMSKS' region motif is present at residues 244–248; sequence KLSKQ. Lys247 serves as a coordination point for ATP.

This sequence belongs to the class-I aminoacyl-tRNA synthetase family. GluQ subfamily. It depends on Zn(2+) as a cofactor.

Catalyzes the tRNA-independent activation of glutamate in presence of ATP and the subsequent transfer of glutamate onto a tRNA(Asp). Glutamate is transferred on the 2-amino-5-(4,5-dihydroxy-2-cyclopenten-1-yl) moiety of the queuosine in the wobble position of the QUC anticodon. This chain is Glutamyl-Q tRNA(Asp) synthetase, found in Yersinia pestis.